The chain runs to 293 residues: Protease HtpX homolog (293 aa).

2 helical membrane passes run 5-25 (IFLF…TLRL) and 43-63 (ALLV…LAMS). A Zn(2+)-binding site is contributed by His148. Residue Glu149 is part of the active site. His152 is a Zn(2+) binding site. 2 helical membrane-spanning segments follow: residues 159–179 (VTLA…SRII) and 199–219 (FVTS…IVMW). Zn(2+) is bound at residue Glu225.

This sequence belongs to the peptidase M48B family. It depends on Zn(2+) as a cofactor.

The protein localises to the cell inner membrane. The protein is Protease HtpX homolog of Nitrosomonas europaea (strain ATCC 19718 / CIP 103999 / KCTC 2705 / NBRC 14298).